The chain runs to 366 residues: Mitogen-activated protein kinase 13 (366 aa).

One can recognise a Protein kinase domain in the interval 25-308 (YLAPAHVGSG…AAQALAHPFF (284 aa)). ATP-binding positions include 31–39 (VGSGAYGAV) and lysine 54. Aspartate 150 serves as the catalytic Proton acceptor. The residue at position 180 (threonine 180) is a Phosphothreonine; by MAP2K3, MAP2K4, MAP2K6 and MAP2K7. The short motif at 180–182 (TGY) is the TXY element. A Phosphotyrosine modification is found at tyrosine 182. Serine 350 is subject to Phosphoserine.

The protein belongs to the protein kinase superfamily. CMGC Ser/Thr protein kinase family. MAP kinase subfamily. As to quaternary structure, interacts with MAPK8IP2. Mg(2+) is required as a cofactor. In terms of processing, dually phosphorylated on Thr-180 and Tyr-182 by MAP2K3/MKK3, MAP2K4/MKK4, MAP2K6/MKK6 and MAP2K7/MKK7, which activates the enzyme. Dephosphorylated by dual specificity phosphatase DUSP1.

It catalyses the reaction L-seryl-[protein] + ATP = O-phospho-L-seryl-[protein] + ADP + H(+). The catalysed reaction is L-threonyl-[protein] + ATP = O-phospho-L-threonyl-[protein] + ADP + H(+). Its activity is regulated as follows. Activated by phosphorylation on threonine and tyrosine by dual specificity kinases, MAP2K3/MKK3, MAP2K6/MKK6, MAP2K4/MKK4 and MAP2K7/MKK7. Activation by ultraviolet radiation, hyperosmotic shock, anisomycin or by TNF-alpha is mediated by MAP2K3/MKK3. Inhibited by dual specificity phosphatase DUSP1. In terms of biological role, serine/threonine kinase which acts as an essential component of the MAP kinase signal transduction pathway. MAPK13 is one of the four p38 MAPKs which play an important role in the cascades of cellular responses evoked by extracellular stimuli such as pro-inflammatory cytokines or physical stress leading to direct activation of transcription factors such as ELK1 and ATF2. Accordingly, p38 MAPKs phosphorylate a broad range of proteins and it has been estimated that they may have approximately 200 to 300 substrates each. MAPK13 is one of the less studied p38 MAPK isoforms. Some of the targets are downstream kinases such as MAPKAPK2, which are activated through phosphorylation and further phosphorylate additional targets. Plays a role in the regulation of protein translation by phosphorylating and inactivating EEF2K. Involved in cytoskeletal remodeling through phosphorylation of MAPT and STMN1. Mediates UV irradiation induced up-regulation of the gene expression of CXCL14. Plays an important role in the regulation of epidermal keratinocyte differentiation, apoptosis and skin tumor development. Phosphorylates the transcriptional activator MYB in response to stress which leads to rapid MYB degradation via a proteasome-dependent pathway. MAPK13 also phosphorylates and down-regulates PRKD1 during regulation of insulin secretion in pancreatic beta cells. The sequence is that of Mitogen-activated protein kinase 13 (Mapk13) from Mus musculus (Mouse).